The sequence spans 362 residues: 3-dehydroquinate synthase (362 aa).

NAD(+) is bound by residues 71-76, 105-109, 129-130, K142, K151, and 169-172; these read DGEQYK, GVIGD, TT, and CLKT. E184, H247, and H264 together coordinate Zn(2+).

The protein belongs to the sugar phosphate cyclases superfamily. Dehydroquinate synthase family. Requires Co(2+) as cofactor. It depends on Zn(2+) as a cofactor. NAD(+) serves as cofactor.

The protein localises to the cytoplasm. It carries out the reaction 7-phospho-2-dehydro-3-deoxy-D-arabino-heptonate = 3-dehydroquinate + phosphate. It functions in the pathway metabolic intermediate biosynthesis; chorismate biosynthesis; chorismate from D-erythrose 4-phosphate and phosphoenolpyruvate: step 2/7. Functionally, catalyzes the conversion of 3-deoxy-D-arabino-heptulosonate 7-phosphate (DAHP) to dehydroquinate (DHQ). The polypeptide is 3-dehydroquinate synthase (Salmonella agona (strain SL483)).